We begin with the raw amino-acid sequence, 218 residues long: DNA-binding protein HU 2 (218 aa).

The interval Met1 to Ser91 is bacterial histone-like domain. Residues Val101–Lys218 form a disordered region. A degenerate repeats region region spans residues Lys118–Lys218. Residues Lys127–Thr161 show a composition bias toward low complexity. Residues Thr162–Ala172 show a composition bias toward basic residues. The segment covering Ala173–Lys182 has biased composition (low complexity). A compositionally biased stretch (basic residues) spans Thr183–Lys218.

The protein belongs to the bacterial histone-like protein family. Long actinobacterial subfamily. In terms of assembly, homodimer.

It localises to the cytoplasm. The protein resides in the nucleoid. Its function is as follows. Histone-like DNA-binding protein which is capable of wrapping DNA to stabilize it, and thus to prevent its denaturation under extreme environmental conditions. This chain is DNA-binding protein HU 2 (hup2), found in Streptomyces coelicolor (strain ATCC BAA-471 / A3(2) / M145).